The chain runs to 268 residues: Protein MSS18 (268 aa).

This sequence to baculovirus occlusion-derived virus envelope protein E27 (ODV-E27).

Its subcellular location is the mitochondrion. Its function is as follows. Involved in splicing of intron aI5-beta of the mitochondrial COX1 transcript. The sequence is that of Protein MSS18 (MSS18) from Saccharomyces cerevisiae (strain ATCC 204508 / S288c) (Baker's yeast).